A 222-amino-acid chain; its full sequence is L-serine dehydratase, beta chain (222 aa).

Residues 150-222 form the ACT domain; that stretch reads TILLEYPEQR…RFTTAKYVEV (73 aa).

The protein belongs to the iron-sulfur dependent L-serine dehydratase family. As to quaternary structure, heterooctamer of four alpha chains and four beta chains. Requires [4Fe-4S] cluster as cofactor.

It catalyses the reaction L-serine = pyruvate + NH4(+). It participates in carbohydrate biosynthesis; gluconeogenesis. The sequence is that of L-serine dehydratase, beta chain (sdhB) from Peptoniphilus asaccharolyticus (Peptostreptococcus asaccharolyticus).